Reading from the N-terminus, the 833-residue chain is Leucine--tRNA ligase (833 aa).

The short motif at 41–52 is the 'HIGH' region element; the sequence is PYPSGAGLHVGH. The short motif at 610–614 is the 'KMSKS' region element; the sequence is KMSKS. Lys613 provides a ligand contact to ATP.

This sequence belongs to the class-I aminoacyl-tRNA synthetase family.

The protein resides in the cytoplasm. The catalysed reaction is tRNA(Leu) + L-leucine + ATP = L-leucyl-tRNA(Leu) + AMP + diphosphate. The protein is Leucine--tRNA ligase of Streptococcus pyogenes serotype M18 (strain MGAS8232).